We begin with the raw amino-acid sequence, 954 residues long: E3 ubiquitin-protein ligase MIB2 (954 aa).

Residues 1–80 (MDLDPYASMQ…AYDLLLYDNA (80 aa)) enclose the MIB/HERC2 1 domain. Residues 86 to 138 (HPNIICDCCKKHGIRGMRWKCKMCFDYDLCTQCYMNNKHDLSHAFERYETAHS) form a ZZ-type zinc finger. Zn(2+)-binding residues include C91, C94, C106, C109, C115, C118, H124, and H128. The 79-residue stretch at 149-227 (LTRITLKGTF…KVDLKCTVEA (79 aa)) folds into the MIB/HERC2 2 domain. 9 ANK repeats span residues 464–493 (QGRT…TVNL), 497–526 (EGDT…GADL), 530–559 (AKCT…DVNL), 563–591 (HGDT…NIDF), 597–626 (QGFN…QLVD), 631–661 (DGFT…DVNV), 665–694 (RNQT…DVNA), 698–726 (DGDT…EMGS), and 766–795 (RGKS…EQQV). 2 consecutive RING-type zinc fingers follow at residues 830–865 (CLVC…IKCQ) and 910–943 (CPIC…PICR).

It is found in the cytoplasm. It catalyses the reaction S-ubiquitinyl-[E2 ubiquitin-conjugating enzyme]-L-cysteine + [acceptor protein]-L-lysine = [E2 ubiquitin-conjugating enzyme]-L-cysteine + N(6)-ubiquitinyl-[acceptor protein]-L-lysine.. The protein operates within protein modification; protein ubiquitination. E3 ubiquitin-protein ligase that mediates ubiquitination of Delta receptors, which act as ligands of Notch proteins. Positively regulates the Delta-mediated Notch signaling by ubiquitinating the intracellular domain of Delta, leading to endocytosis of Delta receptors. The chain is E3 ubiquitin-protein ligase MIB2 (MIB2) from Gallus gallus (Chicken).